A 449-amino-acid polypeptide reads, in one-letter code: Gamma-aminobutyric acid receptor subunit delta (449 aa).

A signal peptide spans 1–24 (MDVLGWLLLPLLLLCTQPHHGARA). The Extracellular segment spans residues 25–251 (MNDIGDYVGS…QLRRNRGVYI (227 aa)). 2 N-linked (GlcNAc...) asparagine glycosylation sites follow: Asn-103 and Asn-106. Cys-164 and Cys-178 are oxidised to a cystine. Residues 252–271 (IQSYMPSVLLVAMSWVSFWI) traverse the membrane as a helical segment. Residues 272–275 (SQAA) are Cytoplasmic-facing. Residues 276 to 298 (VPARVSLGITTVLTMTTLMVSAR) form a helical membrane-spanning segment. Residues 299–308 (SSLPRASAIK) lie on the Extracellular side of the membrane. The chain crosses the membrane as a helical span at residues 309 to 331 (ALDVYFWICYVFVFAALVEYAFA). Topologically, residues 332 to 423 (HFNADYRKKR…SRLKPIDADT (92 aa)) are cytoplasmic. Ser-390 carries the phosphoserine modification. Residues 424–446 (IDIYARAVFPAAFAAVNIIYWAA) traverse the membrane as a helical segment. The Extracellular portion of the chain corresponds to 447-449 (YTM).

It belongs to the ligand-gated ion channel (TC 1.A.9) family. Gamma-aminobutyric acid receptor (TC 1.A.9.5) subfamily. GABRD sub-subfamily. As to quaternary structure, heteropentamer, formed by a combination of alpha (GABRA1-6), beta (GABRB1-3), gamma (GABRG1-3), delta (GABRD), epsilon (GABRE), rho (GABRR1-3), pi (GABRP) and theta (GABRQ) chains, each subunit exhibiting distinct physiological and pharmacological properties.

The protein localises to the cell membrane. The catalysed reaction is chloride(in) = chloride(out). Functionally, delta subunit of the heteropentameric ligand-gated chloride channel gated by gamma-aminobutyric acid (GABA), a major inhibitory neurotransmitter in the brain. GABA-gated chloride channels, also named GABA(A) receptors (GABAAR), consist of five subunits arranged around a central pore and contain GABA active binding site(s) located at the alpha and beta subunit interface(s). When activated by GABA, GABAARs selectively allow the flow of chloride anions across the cell membrane down their electrochemical gradient. GABAARs containing delta/GABRD subunits are predominantly expressed and located in extrasynaptic or perisynaptic positions on hippocampus and cerebellar granule cells, and contribute to the tonic GABAergic inhibition. GABAAR containing alpha-4-beta-3-delta subunits can simultaneously bind GABA and histamine where histamine binds at the interface of two neighboring beta subunits, which may be involved in the regulation of sleep and wakefulness. The sequence is that of Gamma-aminobutyric acid receptor subunit delta from Mus musculus (Mouse).